The sequence spans 380 residues: Cytochrome b (380 aa).

Helical transmembrane passes span 34–54 (FGSLLGICLMTQILTGLLLAM), 78–99 (WLIRNLHANGASFFFICIYLHI), 114–134 (WNTGVILLLTLMATAFVGYVL), and 179–199 (FFALHFLLPFMIAGLTLVHLT). Heme b-binding residues include histidine 84 and histidine 98. 2 residues coordinate heme b: histidine 183 and histidine 197. Position 202 (histidine 202) interacts with a ubiquinone. 4 helical membrane passes run 227-247 (LKDILGFTLMFLLLTTLALFS), 289-309 (LGGVLALAASVLILFLAPFLH), 321-341 (LSQLLFWVLVANLFILTWVGS), and 348-368 (FIIIGQLASFTYFTILLILFP).

The protein belongs to the cytochrome b family. The cytochrome bc1 complex contains 11 subunits: 3 respiratory subunits (MT-CYB, CYC1 and UQCRFS1), 2 core proteins (UQCRC1 and UQCRC2) and 6 low-molecular weight proteins (UQCRH/QCR6, UQCRB/QCR7, UQCRQ/QCR8, UQCR10/QCR9, UQCR11/QCR10 and a cleavage product of UQCRFS1). This cytochrome bc1 complex then forms a dimer. Heme b serves as cofactor.

The protein resides in the mitochondrion inner membrane. Functionally, component of the ubiquinol-cytochrome c reductase complex (complex III or cytochrome b-c1 complex) that is part of the mitochondrial respiratory chain. The b-c1 complex mediates electron transfer from ubiquinol to cytochrome c. Contributes to the generation of a proton gradient across the mitochondrial membrane that is then used for ATP synthesis. The polypeptide is Cytochrome b (MT-CYB) (Procellaria westlandica (Westland petrel)).